The primary structure comprises 264 residues: tRNA pseudouridine synthase A (264 aa).

D52 functions as the Nucleophile in the catalytic mechanism. Position 110 (Y110) interacts with substrate.

It belongs to the tRNA pseudouridine synthase TruA family. As to quaternary structure, homodimer.

The enzyme catalyses uridine(38/39/40) in tRNA = pseudouridine(38/39/40) in tRNA. In terms of biological role, formation of pseudouridine at positions 38, 39 and 40 in the anticodon stem and loop of transfer RNAs. In Wigglesworthia glossinidia brevipalpis, this protein is tRNA pseudouridine synthase A.